A 513-amino-acid polypeptide reads, in one-letter code: ATP synthase subunit alpha (513 aa).

169–176 (GDRQTGKT) is an ATP binding site.

It belongs to the ATPase alpha/beta chains family. In terms of assembly, F-type ATPases have 2 components, CF(1) - the catalytic core - and CF(0) - the membrane proton channel. CF(1) has five subunits: alpha(3), beta(3), gamma(1), delta(1), epsilon(1). CF(0) has three main subunits: a(1), b(2) and c(9-12). The alpha and beta chains form an alternating ring which encloses part of the gamma chain. CF(1) is attached to CF(0) by a central stalk formed by the gamma and epsilon chains, while a peripheral stalk is formed by the delta and b chains.

The protein localises to the cell inner membrane. The enzyme catalyses ATP + H2O + 4 H(+)(in) = ADP + phosphate + 5 H(+)(out). Functionally, produces ATP from ADP in the presence of a proton gradient across the membrane. The alpha chain is a regulatory subunit. This chain is ATP synthase subunit alpha, found in Shewanella baltica (strain OS223).